The primary structure comprises 208 residues: 2-phospho-L-lactate guanylyltransferase (208 aa).

Belongs to the CofC family. In terms of assembly, homodimer.

It catalyses the reaction (2S)-2-phospholactate + GTP + H(+) = (2S)-lactyl-2-diphospho-5'-guanosine + diphosphate. It participates in cofactor biosynthesis; coenzyme F420 biosynthesis. Its function is as follows. Guanylyltransferase that catalyzes the activation of (2S)-2-phospholactate (2-PL) as (2S)-lactyl-2-diphospho-5'-guanosine, via the condensation of 2-PL with GTP. It is involved in the biosynthesis of coenzyme F420, a hydride carrier cofactor. The sequence is that of 2-phospho-L-lactate guanylyltransferase from Methanosarcina mazei (strain ATCC BAA-159 / DSM 3647 / Goe1 / Go1 / JCM 11833 / OCM 88) (Methanosarcina frisia).